The sequence spans 657 residues: Protein PSK SIMULATOR 1 (657 aa).

Polar residues-rich tracts occupy residues 1–15 (MGGL…NNAP), 26–39 (HLNN…SHSG), 62–76 (ESFS…SHPQ), and 540–556 (RSPN…SHNP). 2 disordered regions span residues 1-80 (MGGL…NIED) and 534-559 (PVKS…PSMG). Residue Gly-2 is the site of N-myristoyl glycine attachment.

The protein localises to the nucleus. Its function is as follows. Promotes seedling growth probably via the regulation of phytosulfokine (PSK) signaling; PSK are peptide phytohormones acting as growth factors. Together with PSI2 and PSI3, required during vegetative growth and reproduction. May also have a function in carbohydrate metabolism. This chain is Protein PSK SIMULATOR 1, found in Arabidopsis thaliana (Mouse-ear cress).